Reading from the N-terminus, the 66-residue chain is Small ribosomal subunit protein bS21A (66 aa).

Positions Lys34–Lys46 are enriched in basic residues. The segment at Lys34–Asp66 is disordered.

It belongs to the bacterial ribosomal protein bS21 family.

The sequence is that of Small ribosomal subunit protein bS21A from Geobacter sulfurreducens (strain ATCC 51573 / DSM 12127 / PCA).